We begin with the raw amino-acid sequence, 162 residues long: Large ribosomal subunit protein uL10 (162 aa).

The protein belongs to the universal ribosomal protein uL10 family. In terms of assembly, part of the ribosomal stalk of the 50S ribosomal subunit. The N-terminus interacts with L11 and the large rRNA to form the base of the stalk. The C-terminus forms an elongated spine to which L12 dimers bind in a sequential fashion forming a multimeric L10(L12)X complex.

In terms of biological role, forms part of the ribosomal stalk, playing a central role in the interaction of the ribosome with GTP-bound translation factors. This chain is Large ribosomal subunit protein uL10, found in Phytoplasma mali (strain AT).